Consider the following 372-residue polypeptide: Putative 26S proteasome regulatory subunit homolog MTBMA_c13930 (372 aa).

ATP is bound at residue 164 to 171; the sequence is GSPGTGKT.

The protein belongs to the AAA ATPase family.

In terms of biological role, the 26S proteasome is involved in the ATP-dependent degradation of ubiquitinated proteins. The regulatory (or ATPase) complex confers ATP dependency and substrate specificity to the 26S complex. This is Putative 26S proteasome regulatory subunit homolog MTBMA_c13930 from Methanothermobacter marburgensis (strain ATCC BAA-927 / DSM 2133 / JCM 14651 / NBRC 100331 / OCM 82 / Marburg) (Methanobacterium thermoautotrophicum).